The sequence spans 323 residues: Mas-related G-protein coupled receptor member B4 (323 aa).

Residues 1–34 (MSPTTQAWSINNTVVKENYYTEILSCITTFNTLN) lie on the Extracellular side of the membrane. The N-linked (GlcNAc...) asparagine glycan is linked to Asn-11. Residues 35 to 55 (FLIVIISVVGMAGNATVLWLL) form a helical membrane-spanning segment. Over 56 to 63 (GFHMHRNA) the chain is Cytoplasmic. The helical transmembrane segment at 64 to 84 (FSVYVLNLAGADFLYLCAQTV) threads the bilayer. Residues 85–98 (YSLECVLQFDNSYF) are Extracellular-facing. The helical transmembrane segment at 99–119 (YFLLTILMFNYLAGFCMIAAI) threads the bilayer. Over 120-147 (STERCLSVTWPIWYHCQRPRHTSATVCA) the chain is Cytoplasmic. Residues 148–168 (LFWAFSLLLSLLLGQGCGFLF) traverse the membrane as a helical segment. Residues 169 to 180 (SKFDYSFCRYCN) are Extracellular-facing. Residues 181 to 201 (FIATAFLIVIFMVLFVSSLAL) form a helical membrane-spanning segment. Residues 202 to 224 (LAKIICGSHRIPVTRFYVTIALT) are Cytoplasmic-facing. A helical transmembrane segment spans residues 225–245 (VLVFIFFGLPIGICVFLLPWI). At 246–255 (HMMLSSFFYE) the chain is on the extracellular side. A helical transmembrane segment spans residues 256-276 (MVTLLSCVNSCANPIIYFFVG). The Cytoplasmic portion of the chain corresponds to 277 to 323 (SIRHHRLQRQTLKLLLQRAMQDTPEEEGGERGPSQKSEDLEVVRCSS). Residues 298–323 (DTPEEEGGERGPSQKSEDLEVVRCSS) form a disordered region. Residues 312–323 (KSEDLEVVRCSS) are compositionally biased toward basic and acidic residues.

Belongs to the G-protein coupled receptor 1 family. Mas subfamily. In terms of tissue distribution, expressed strongly in newborn dorsal root ganglia, adult dorsal root ganglia and trigeminal ganlia.

Its subcellular location is the membrane. Functionally, orphan receptor. Probably involved in the function of nociceptive neurons. May regulate nociceptor function and/or development, including the sensation or modulation of pain. The sequence is that of Mas-related G-protein coupled receptor member B4 (Mrgprb4) from Rattus norvegicus (Rat).